The chain runs to 57 residues: Large ribosomal subunit protein uL30 (57 aa).

It belongs to the universal ribosomal protein uL30 family. Part of the 50S ribosomal subunit.

This chain is Large ribosomal subunit protein uL30, found in Maridesulfovibrio salexigens (strain ATCC 14822 / DSM 2638 / NCIMB 8403 / VKM B-1763) (Desulfovibrio salexigens).